Reading from the N-terminus, the 576-residue chain is 5'-nucleotidase (576 aa).

The signal sequence occupies residues M1–A28. Residues D38 and H40 each contribute to the Zn(2+) site. A disulfide bond links C53 and C59. The N-linked (GlcNAc...) asparagine glycan is linked to N55. The Zn(2+) site is built by D87, N119, H222, and H245. Residues N313 and N335 are each glycosylated (N-linked (GlcNAc...) asparagine). 2 disulfide bridges follow: C355–C360 and C367–C389. R356 contacts AMP. Residue R356 coordinates IMP. AMP contacts are provided by N392 and R397. 2 residues coordinate IMP: N392 and R397. N405 is a glycosylation site (N-linked (GlcNAc...) asparagine). F419 contacts AMP. Position 419 (F419) interacts with IMP. C478 and C481 are oxidised to a cystine. Residues Y502 and D508 each coordinate AMP. Y502 and D508 together coordinate IMP. S551 carries GPI-anchor amidated serine lipidation. A propeptide spans A552–Q576 (removed in mature form).

This sequence belongs to the 5'-nucleotidase family. Homodimer. Zn(2+) serves as cofactor. Expressed at high levels in the placenta, kidney, lung and stomach and at lower levels in the thymus, spleen, skeletal muscle and esophagus.

The protein resides in the cell membrane. The enzyme catalyses a ribonucleoside 5'-phosphate + H2O = a ribonucleoside + phosphate. The catalysed reaction is a 2'-deoxyribonucleoside 5'-phosphate + H2O = a 2'-deoxyribonucleoside + phosphate. It carries out the reaction dTMP + H2O = thymidine + phosphate. It catalyses the reaction CMP + H2O = cytidine + phosphate. The enzyme catalyses IMP + H2O = inosine + phosphate. The catalysed reaction is AMP + H2O = adenosine + phosphate. It carries out the reaction GMP + H2O = guanosine + phosphate. It catalyses the reaction UMP + H2O = uridine + phosphate. The enzyme catalyses dAMP + H2O = 2'-deoxyadenosine + phosphate. The catalysed reaction is dCMP + H2O = 2'-deoxycytidine + phosphate. In terms of biological role, catalyzes the hydrolysis of nucleotide monophosphates, releasing inorganic phosphate and the corresponding nucleoside. Hydrolyzes IMP. Shows a preference for ribonucleotide monophosphates over their equivalent deoxyribose forms. Although AMP is the preferred substrate can also hydrolyze UMP, GMP, CMP, dAMP, dCMP, dTMP, NAD and NMN. This chain is 5'-nucleotidase (Nt5e), found in Mus musculus (Mouse).